Reading from the N-terminus, the 220-residue chain is Metalloproteinase inhibitor 2 (220 aa).

The signal sequence occupies residues 1-26 (MGAAARTLRLALGLLLLATLLRPADA). Cys27 is a binding site for Zn(2+). 2 involved in metalloproteinase-binding regions span residues 27–30 (CSCS) and 95–96 (SA). Intrachain disulfides connect Cys27-Cys98, Cys29-Cys127, Cys39-Cys152, Cys154-Cys201, Cys159-Cys164, and Cys172-Cys193. An NTR domain is found at 27–152 (CSCSPVHPQQ…SLNHRYQMGC (126 aa)).

This sequence belongs to the protease inhibitor I35 (TIMP) family. Interacts (via the C-terminal) with MMP2 (via the C-terminal PEX domain); the interaction inhibits the MMP2 activity. The activity of TIMP2 is dependent on the presence of disulfide bonds.

It is found in the secreted. Functionally, complexes with metalloproteinases (such as collagenases) and irreversibly inactivates them by binding to their catalytic zinc cofactor. Known to act on MMP-1, MMP-2, MMP-3, MMP-7, MMP-8, MMP-9, MMP-10, MMP-13, MMP-14, MMP-15, MMP-16 and MMP-19. The chain is Metalloproteinase inhibitor 2 (TIMP2) from Homo sapiens (Human).